A 393-amino-acid polypeptide reads, in one-letter code: Digeranylgeranylglycerophospholipid reductase (393 aa).

Residues Ala13, Asp32, Cys43, Ala44, Gly46, Arg95, Val119, Asp274, and Gly286 each coordinate FAD. Lys327 and Gly363 together coordinate a 2,3-bis-O-(geranylgeranyl)-sn-glycerol 1-phospholipid.

Belongs to the geranylgeranyl reductase family. DGGGPL reductase subfamily. FAD serves as cofactor.

The enzyme catalyses a 2,3-bis-O-phytanyl-sn-glycerol 1-phospholipid + 8 A = a 2,3-bis-O-(geranylgeranyl)-sn-glycerol 1-phospholipid + 8 AH2. The catalysed reaction is 2,3-bis-O-(phytanyl)-sn-glycerol 1-phosphate + 8 A = 2,3-bis-O-(geranylgeranyl)-sn-glycerol 1-phosphate + 8 AH2. It carries out the reaction CDP-2,3-bis-O-(geranylgeranyl)-sn-glycerol + 8 AH2 = CDP-2,3-bis-O-(phytanyl)-sn-glycerol + 8 A. It catalyses the reaction archaetidylserine + 8 AH2 = 2,3-bis-O-phytanyl-sn-glycero-3-phospho-L-serine + 8 A. It participates in membrane lipid metabolism; glycerophospholipid metabolism. In terms of biological role, is involved in the reduction of 2,3-digeranylgeranylglycerophospholipids (unsaturated archaeols) into 2,3-diphytanylglycerophospholipids (saturated archaeols) in the biosynthesis of archaeal membrane lipids. Catalyzes the formation of archaetidic acid (2,3-di-O-phytanyl-sn-glyceryl phosphate) from 2,3-di-O-geranylgeranylglyceryl phosphate (DGGGP) via the hydrogenation of each double bond of the isoprenoid chains. Is also probably able to reduce double bonds of geranyl groups in CDP-2,3-bis-O-(geranylgeranyl)-sn-glycerol and archaetidylserine, thus acting at various stages in the biosynthesis of archaeal membrane lipids. The chain is Digeranylgeranylglycerophospholipid reductase from Pyrococcus furiosus (strain ATCC 43587 / DSM 3638 / JCM 8422 / Vc1).